A 367-amino-acid polypeptide reads, in one-letter code: MTAHRDAIRTARSMVVKVGTNALTTPAGVFDAGRLAGLADAIEARMKAGTDVVIVSSGAIAAGIEPLGLSRRPRDLATKQAAASVGQVALVNSWSAAFARYGRTVGQVLLSAHDISMRAQHTNAQRTLDRLRALHAVAIVNENDTVATNEIRFGDNDRLSALVAHLVGAEALVLLSDIDGLYDSDPRKTKGAKFIPEVTGAEDLAGVVAGPGSDLGTGGMTSKMSSALLAADAGVPVLLAAAADAASALTDASVGTVFAARPVRMSARRFWVRYAAEAAGALTLDEGAVRAVVHQRRSLLPAGITAVSGRFYAGDVVELRGPDAVPVARGVVAYDTTELATMMGRSTSELPGELRRPAVHADDLVAV.

Residue Lys17 coordinates ATP. 3 residues coordinate substrate: Ser57, Asp144, and Asn156. ATP contacts are provided by residues 176–177 and 217–223; these read SD and TGGMTSK. Residues 279–357 enclose the PUA domain; sequence AGALTLDEGA…SELPGELRRP (79 aa).

This sequence belongs to the glutamate 5-kinase family.

Its subcellular location is the cytoplasm. The enzyme catalyses L-glutamate + ATP = L-glutamyl 5-phosphate + ADP. It functions in the pathway amino-acid biosynthesis; L-proline biosynthesis; L-glutamate 5-semialdehyde from L-glutamate: step 1/2. Its function is as follows. Catalyzes the transfer of a phosphate group to glutamate to form L-glutamate 5-phosphate. This chain is Glutamate 5-kinase, found in Mycolicibacterium paratuberculosis (strain ATCC BAA-968 / K-10) (Mycobacterium paratuberculosis).